Reading from the N-terminus, the 257-residue chain is Imidazole glycerol phosphate synthase subunit HisF (257 aa).

Catalysis depends on residues Asp11 and Asp130.

This sequence belongs to the HisA/HisF family. In terms of assembly, heterodimer of HisH and HisF.

It localises to the cytoplasm. The catalysed reaction is 5-[(5-phospho-1-deoxy-D-ribulos-1-ylimino)methylamino]-1-(5-phospho-beta-D-ribosyl)imidazole-4-carboxamide + L-glutamine = D-erythro-1-(imidazol-4-yl)glycerol 3-phosphate + 5-amino-1-(5-phospho-beta-D-ribosyl)imidazole-4-carboxamide + L-glutamate + H(+). Its pathway is amino-acid biosynthesis; L-histidine biosynthesis; L-histidine from 5-phospho-alpha-D-ribose 1-diphosphate: step 5/9. Functionally, IGPS catalyzes the conversion of PRFAR and glutamine to IGP, AICAR and glutamate. The HisF subunit catalyzes the cyclization activity that produces IGP and AICAR from PRFAR using the ammonia provided by the HisH subunit. In Prochlorococcus marinus (strain MIT 9515), this protein is Imidazole glycerol phosphate synthase subunit HisF.